Consider the following 81-residue polypeptide: Small hydrophobic protein (81 aa).

The Intravirion portion of the chain corresponds to 1–19; that stretch reads MNSTSTIIEFTGEFWTYFT. The helical; Signal-anchor for type II membrane protein transmembrane segment at 20 to 40 threads the bilayer; sequence LVFMMLTIGFFFIVTSLVAAI. At 41-81 the chain is on the virion surface side; it reads LNKLCDLNDHHTNSLDIRTKLRSDTQLITRAHEESINQSSN. Asparagine 77 is a glycosylation site (N-linked (GlcNAc...) asparagine; by host).

Belongs to the orthopneumovirus small hydrophobic protein family. Homopentamer forming a funnel-like pore. Interacts with glycoprotein G; this interaction occurs on the surface of virion particles and infected cells. Interacts with host BCAP31 (via C-terminus); this interaction is direct. Post-translationally, four species of SH have been detected in infected cell cytoplasm: a 7.5 kDa non-glycosylated form (SH0), a 13-15 kDa form that contains one or two N-linked carbohydrate side chains of the high-mannose type (SHg), a 21-30 kDa polylactosaminoglycan-modified form of the protein (SHp), and the isoform generated by alternative translational initiation. Of these different forms, SH0 is by far the most abundant protein detected during virus infection. Tyrosine phosphorylated.

It localises to the virion membrane. Its subcellular location is the host cell membrane. The protein localises to the host Golgi apparatus membrane. It is found in the host endoplasmic reticulum membrane. Channel activity is inhibited by copper. Also inhibited by small-molecule pyronin B. In terms of biological role, viroporin that forms a homopentameric ion channel displaying low ion selectivity. May play a role in virus morphogenesis and pathogenicity at various stages of the viral life cycle. Accumulates at the membrane of the Golgi apparatus in infected cells and may facilitate virus release by modifying the secretory pathway. May enhance host membrane permeability and disrupt cellular ion homeostasis, which can be sensed as damage-associated molecular patterns/danger signals, triggering NLRP3 inflammasome activation and inflammatory immune response. Also inhibits host TNFA-mediated signaling pathway and may delay apoptosis, allowing time for the virus to replicate. The chain is Small hydrophobic protein (SH) from Bos taurus (Bovine).